A 218-amino-acid chain; its full sequence is Monomethylamine corrinoid protein 2 (218 aa).

The region spanning 1–91 (MTNTEIFNKL…ELEKTKVEGE (91 aa)) is the B12-binding N-terminal domain. The B12-binding domain maps to 94–218 (TGLAITFVAE…AAKVALNVMK (125 aa)). Methylcob(III)alamin is bound at residue H107.

Belongs to the methylamine corrinoid protein family. As to quaternary structure, can form a complex with MtmB.

Its pathway is one-carbon metabolism; methanogenesis from methylamine. Functionally, acts as a methyl group carrier between MtmB and MtbA. This is Monomethylamine corrinoid protein 2 (mtmC2) from Methanosarcina mazei (strain ATCC BAA-159 / DSM 3647 / Goe1 / Go1 / JCM 11833 / OCM 88) (Methanosarcina frisia).